The chain runs to 463 residues: Ribosomal protein uS12 methylthiotransferase RimO (463 aa).

In terms of domain architecture, MTTase N-terminal spans 15-130 (PKVGMVSLGC…VMQAVHSHLP (116 aa)). Residues Cys-24, Cys-60, Cys-89, Cys-161, Cys-165, and Cys-168 each coordinate [4Fe-4S] cluster. A Radical SAM core domain is found at 147–392 (LTPRHYAYLK…MEVAEEVSAA (246 aa)). Positions 395-463 (ARKIGKTLKV…ADSHDLWGEV (69 aa)) constitute a TRAM domain.

The protein belongs to the methylthiotransferase family. RimO subfamily. [4Fe-4S] cluster serves as cofactor.

It localises to the cytoplasm. It carries out the reaction L-aspartate(89)-[ribosomal protein uS12]-hydrogen + (sulfur carrier)-SH + AH2 + 2 S-adenosyl-L-methionine = 3-methylsulfanyl-L-aspartate(89)-[ribosomal protein uS12]-hydrogen + (sulfur carrier)-H + 5'-deoxyadenosine + L-methionine + A + S-adenosyl-L-homocysteine + 2 H(+). Catalyzes the methylthiolation of an aspartic acid residue of ribosomal protein uS12. This is Ribosomal protein uS12 methylthiotransferase RimO from Burkholderia pseudomallei (strain 668).